A 434-amino-acid chain; its full sequence is D-amino acid dehydrogenase (434 aa).

3 to 17 (VVILGSGVVGVTSAW) is a binding site for FAD.

This sequence belongs to the DadA oxidoreductase family. FAD is required as a cofactor.

It catalyses the reaction a D-alpha-amino acid + A + H2O = a 2-oxocarboxylate + AH2 + NH4(+). It functions in the pathway amino-acid degradation; D-alanine degradation; NH(3) and pyruvate from D-alanine: step 1/1. Functionally, oxidative deamination of D-amino acids. The polypeptide is D-amino acid dehydrogenase (Yersinia pseudotuberculosis serotype O:3 (strain YPIII)).